A 238-amino-acid chain; its full sequence is Large ribosomal subunit protein uL5c (238 aa).

Belongs to the universal ribosomal protein uL5 family. In terms of assembly, part of the 50S ribosomal subunit; contacts the 5S rRNA.

It is found in the plastid. The protein resides in the chloroplast. Binds 5S rRNA, forms part of the central protuberance of the 50S subunit. The polypeptide is Large ribosomal subunit protein uL5c (rpl5) (Phaeodactylum tricornutum (strain CCAP 1055/1)).